The primary structure comprises 156 residues: Probable cyclic pyranopterin monophosphate synthase (156 aa).

Residues 74-76 (MCH) and 110-111 (ME) contribute to the substrate site. The active site involves D125.

This sequence belongs to the MoaC family. As to quaternary structure, homohexamer; trimer of dimers.

It carries out the reaction (8S)-3',8-cyclo-7,8-dihydroguanosine 5'-triphosphate = cyclic pyranopterin phosphate + diphosphate. The protein operates within cofactor biosynthesis; molybdopterin biosynthesis. Functionally, catalyzes the conversion of (8S)-3',8-cyclo-7,8-dihydroguanosine 5'-triphosphate to cyclic pyranopterin monophosphate (cPMP). This chain is Probable cyclic pyranopterin monophosphate synthase, found in Methanospirillum hungatei JF-1 (strain ATCC 27890 / DSM 864 / NBRC 100397 / JF-1).